Here is a 414-residue protein sequence, read N- to C-terminus: 26S proteasome regulatory subunit 8 homolog (414 aa).

Residue 197 to 204 (GPPGTGKT) coordinates ATP.

It belongs to the AAA ATPase family.

Its subcellular location is the cytoplasm. It is found in the nucleus. The 26S proteasome is involved in the ATP-dependent degradation of ubiquitinated proteins. The regulatory (or ATPase) complex confers ATP dependency and substrate specificity to the 26S complex. The polypeptide is 26S proteasome regulatory subunit 8 homolog (Naegleria fowleri (Brain eating amoeba)).